Reading from the N-terminus, the 144-residue chain is Protein MIX23 (144 aa).

The residue at position 2 (Ala2) is an N-acetylalanine. Residues 82–120 are a coiled coil; the sequence is VKSLREEREKNLDDLTLLKRLRKEQTKLKWMQSELNVEE. Residue Lys100 is modified to N6-acetyllysine.

Belongs to the MIX23 family.

This Mus musculus (Mouse) protein is Protein MIX23.